The sequence spans 394 residues: Subtilisin-like protease 4 (394 aa).

A signal peptide spans 1–17; sequence CLKTLSVFLAAFAAADA. A propeptide spanning residues 18–116 is cleaved from the precursor; the sequence is RAVFKTQGHK…VEQDQVVRIS (99 aa). An Inhibitor I9 domain is found at 36–115; that stretch reads YIVVMKDGVS…YVEQDQVVRI (80 aa). Asparagine 100 carries N-linked (GlcNAc...) asparagine glycosylation. The Peptidase S8 domain occupies 126 to 394; it reads SWGLGRVSHR…STTNRLLYNG (269 aa). Active-site charge relay system residues include aspartate 158 and histidine 189. 2 N-linked (GlcNAc...) asparagine glycosylation sites follow: asparagine 250 and asparagine 306. Serine 344 functions as the Charge relay system in the catalytic mechanism.

This sequence belongs to the peptidase S8 family.

Its subcellular location is the secreted. In terms of biological role, secreted subtilisin-like serine protease with keratinolytic activity that contributes to pathogenicity. The chain is Subtilisin-like protease 4 (SUB4) from Trichophyton equinum (Horse ringworm fungus).